Reading from the N-terminus, the 206-residue chain is Proteasome subunit beta 1 (206 aa).

Positions Met-1–Gly-14 are cleaved as a propeptide — removed in mature form; by autocatalysis. The active-site Nucleophile is the Thr-15.

This sequence belongs to the peptidase T1B family. The 20S proteasome core is composed of 14 alpha and 14 beta subunits that assemble into four stacked heptameric rings, resulting in a barrel-shaped structure. The two inner rings, each composed of seven catalytic beta subunits, are sandwiched by two outer rings, each composed of seven alpha subunits. The catalytic chamber with the active sites is on the inside of the barrel. Has a gated structure, the ends of the cylinder being occluded by the N-termini of the alpha-subunits. Is capped at one or both ends by the proteasome regulatory ATPase, PAN.

The protein resides in the cytoplasm. It carries out the reaction Cleavage of peptide bonds with very broad specificity.. With respect to regulation, the formation of the proteasomal ATPase PAN-20S proteasome complex, via the docking of the C-termini of PAN into the intersubunit pockets in the alpha-rings, triggers opening of the gate for substrate entry. Interconversion between the open-gate and close-gate conformations leads to a dynamic regulation of the 20S proteasome proteolysis activity. Functionally, component of the proteasome core, a large protease complex with broad specificity involved in protein degradation. The sequence is that of Proteasome subunit beta 1 from Caldivirga maquilingensis (strain ATCC 700844 / DSM 13496 / JCM 10307 / IC-167).